Consider the following 102-residue polypeptide: Trans-acting regulatory protein HvrA (102 aa).

The DNA-binding element occupies 80-85 (RGRKPK).

It belongs to the histone-like protein H-NS family. Homodimer that oligomerizes on DNA into higher-order complexes that form bridges between disparate regions of DNA compacting it.

The protein localises to the cytoplasm. It localises to the nucleoid. Its function is as follows. A dim-light trans-acting activator of Puf and Puh expression, that has no effect on the expression of the Puc operon. Responsible for regulating light-harvesting-I and reaction center structural gene expression differentially from that of light-harvesting-II expression in response to alterations in light. Proper light regulation of light-harvesting and reaction center polypeptide synthesis is an important physiological trait that enables cells to adapt to ever-changing environmental conditions of light intensity. In Rhodobacter capsulatus (Rhodopseudomonas capsulata), this protein is Trans-acting regulatory protein HvrA (hvrA).